The chain runs to 252 residues: Type III pantothenate kinase (252 aa).

An ATP-binding site is contributed by 6–13; the sequence is DIGNTNIV. 107 to 110 provides a ligand contact to substrate; sequence GADL. The active-site Proton acceptor is the aspartate 109. Aspartate 129 contacts K(+). Threonine 132 provides a ligand contact to ATP. Threonine 184 contacts substrate.

The protein belongs to the type III pantothenate kinase family. In terms of assembly, homodimer. Requires NH4(+) as cofactor. The cofactor is K(+).

The protein localises to the cytoplasm. The enzyme catalyses (R)-pantothenate + ATP = (R)-4'-phosphopantothenate + ADP + H(+). It functions in the pathway cofactor biosynthesis; coenzyme A biosynthesis; CoA from (R)-pantothenate: step 1/5. Its function is as follows. Catalyzes the phosphorylation of pantothenate (Pan), the first step in CoA biosynthesis. This Bifidobacterium animalis subsp. lactis (strain AD011) protein is Type III pantothenate kinase.